Consider the following 205-residue polypeptide: Imidazole glycerol phosphate synthase subunit HisH (205 aa).

One can recognise a Glutamine amidotransferase type-1 domain in the interval 3–205; sequence RIALLDYGMG…LLKNFVEWNI (203 aa). Catalysis depends on cysteine 80, which acts as the Nucleophile. Catalysis depends on residues histidine 185 and glutamate 187.

In terms of assembly, heterodimer of HisH and HisF.

The protein localises to the cytoplasm. The catalysed reaction is 5-[(5-phospho-1-deoxy-D-ribulos-1-ylimino)methylamino]-1-(5-phospho-beta-D-ribosyl)imidazole-4-carboxamide + L-glutamine = D-erythro-1-(imidazol-4-yl)glycerol 3-phosphate + 5-amino-1-(5-phospho-beta-D-ribosyl)imidazole-4-carboxamide + L-glutamate + H(+). It carries out the reaction L-glutamine + H2O = L-glutamate + NH4(+). The protein operates within amino-acid biosynthesis; L-histidine biosynthesis; L-histidine from 5-phospho-alpha-D-ribose 1-diphosphate: step 5/9. Its function is as follows. IGPS catalyzes the conversion of PRFAR and glutamine to IGP, AICAR and glutamate. The HisH subunit catalyzes the hydrolysis of glutamine to glutamate and ammonia as part of the synthesis of IGP and AICAR. The resulting ammonia molecule is channeled to the active site of HisF. This chain is Imidazole glycerol phosphate synthase subunit HisH, found in Acinetobacter baylyi (strain ATCC 33305 / BD413 / ADP1).